A 568-amino-acid chain; its full sequence is MGSSKSKPKDPSQRRRSLEPPDSTHHGGFPASQTPNKTAAPDTHRTPSRSFGTVATEPKLFGGFNTSDTVTSPQRAGALAGGVTTFVALYDYESRTETDLSFKKGERLQIVNNTEGDWWLAHSLTTGQTGYIPSNYVAPSDSIQAEEWYFGKITRRESERLLLNPENPRGTFLVRESETTKGAYCLSVSDFDNARGLNVKHYKIRKLDSGGFYITSRTQFSSLQQLVAYYSKHADGLCHRLTNVCPTSKPQTQGLAKDAWEIPRESLRLEVKLGQGCFGEVWMGTWNGTTRVAIKTLKPGTMSPEAFLQEAQVMKKLRHEKLVRLYAVVSEEPIYIVTEYMSKGSLLDFLKGEMGKYLRLPQLVDMAAQIASGMAYVERMNYVHRDLRAANILVGENLVCKVADFGLARLIEDNEYTARQGAKFPIKWTAPEAALYGRFTIKSDVWSFGILLTELTTKGRVPYPGMVNREVLDQVERGYRMPCPPECPESLHDLMCQCWRKDPEERPTFEYLQAFLEDYFTSTEPTAVHMATDPGKYTTAHKSRARVSSNTAVARPAAPVRVLLKPSV.

Positions 1-58 (MGSSKSKPKDPSQRRRSLEPPDSTHHGGFPASQTPNKTAAPDTHRTPSRSFGTVATEP) are disordered. The N-myristoyl glycine; by host moiety is linked to residue Gly-2. The span at 7–25 (KPKDPSQRRRSLEPPDSTH) shows a compositional bias: basic and acidic residues. The region spanning 81-142 (GGVTTFVALY…PSNYVAPSDS (62 aa)) is the SH3 domain. The SH2 domain maps to 148–245 (WYFGKITRRE…GLCHRLTNVC (98 aa)). In terms of domain architecture, Protein kinase spans 267–520 (LRLEVKLGQG…YLQAFLEDYF (254 aa)). Residues 273–281 (LGQGCFGEV) and Lys-295 each bind ATP. The active-site Proton acceptor is the Asp-386. Tyr-416 is modified (phosphotyrosine; by autocatalysis).

It belongs to the protein kinase superfamily. Tyr protein kinase family. SRC subfamily. The phosphorylated form is termed pp60v-src.

It catalyses the reaction L-tyrosyl-[protein] + ATP = O-phospho-L-tyrosyl-[protein] + ADP + H(+). Functionally, this phosphoprotein, required for both the initiation and the maintenance of neoplastic transformation, is a protein kinase that catalyzes the phosphorylation of tyrosine residues in vitro. The polypeptide is Tyrosine-protein kinase transforming protein Src (V-SRC) (Galliformes).